We begin with the raw amino-acid sequence, 545 residues long: Glucose-6-phosphate isomerase (545 aa).

Catalysis depends on Glu-351, which acts as the Proton donor. Active-site residues include His-382 and Lys-510.

It belongs to the GPI family.

It localises to the cytoplasm. The catalysed reaction is alpha-D-glucose 6-phosphate = beta-D-fructose 6-phosphate. It functions in the pathway carbohydrate biosynthesis; gluconeogenesis. The protein operates within carbohydrate degradation; glycolysis; D-glyceraldehyde 3-phosphate and glycerone phosphate from D-glucose: step 2/4. Functionally, catalyzes the reversible isomerization of glucose-6-phosphate to fructose-6-phosphate. The protein is Glucose-6-phosphate isomerase of Helicobacter pylori (strain G27).